Here is a 465-residue protein sequence, read N- to C-terminus: Argininosuccinate lyase (465 aa).

This sequence belongs to the lyase 1 family. Argininosuccinate lyase subfamily.

The protein resides in the cytoplasm. It catalyses the reaction 2-(N(omega)-L-arginino)succinate = fumarate + L-arginine. Its pathway is amino-acid biosynthesis; L-arginine biosynthesis; L-arginine from L-ornithine and carbamoyl phosphate: step 3/3. The polypeptide is Argininosuccinate lyase (Rhodopseudomonas palustris (strain HaA2)).